The sequence spans 414 residues: tRNA N6-adenosine threonylcarbamoyltransferase, mitochondrial (414 aa).

The transit peptide at 1 to 29 (MLILTKTAGVFFKPSKRKVYEFLRSFNFH) directs the protein to the mitochondrion. An N6-acetyllysine mark is found at Lys-74 and Lys-140. Positions 147 and 151 each coordinate a divalent metal cation. Substrate is bound by residues 169–173 (LISGG) and Asp-202. Lys-203 is modified (N6-acetyllysine). The substrate site is built by Gly-222 and Glu-226. Residues Lys-230, Lys-240, and Lys-299 each carry the N6-acetyllysine modification. Substrate-binding positions include 329–330 (SN) and Thr-357. Asp-358 lines the a divalent metal cation pocket.

The protein belongs to the KAE1 / TsaD family. In terms of assembly, monomer. A divalent metal cation is required as a cofactor. Widely expressed, with maximum expression in pituitary gland, prostate, rectum and uterus.

The protein localises to the mitochondrion. The enzyme catalyses L-threonylcarbamoyladenylate + adenosine(37) in tRNA = N(6)-L-threonylcarbamoyladenosine(37) in tRNA + AMP + H(+). Its function is as follows. Required for the formation of a threonylcarbamoyl group on adenosine at position 37 (t(6)A37) in mitochondrial tRNAs that read codons beginning with adenine. Probably involved in the transfer of the threonylcarbamoyl moiety of threonylcarbamoyl-AMP (TC-AMP) to the N6 group of A37. Involved in mitochondrial genome maintenance. In Homo sapiens (Human), this protein is tRNA N6-adenosine threonylcarbamoyltransferase, mitochondrial.